A 776-amino-acid polypeptide reads, in one-letter code: Palmitoyltransferase AKR1 (776 aa).

Over 1-311 the chain is Cytoplasmic; the sequence is MDQEMTTVAS…MEGKLGPRNT (311 aa). The segment at 38-58 is disordered; it reads RLDEGSSIRGGELERDSQEVG. ANK repeat units follow at residues 68–97, 103–132, 137–166, 170–199, 203–232, and 236–265; these read CHDL…SLNL, QDVT…DIDA, LKAT…DPNI, QGFN…AIDE, DGHT…SVNS, and AGMT…SLDA. A helical transmembrane segment spans residues 312-332; sequence ILAIFLLPIAVLWLIFSTFKW. At 333–336 the chain is on the lumenal side; the sequence is LPVY. The chain crosses the membrane as a helical span at residues 337–357; sequence VGVPFAIAEFMGMQYTVVLVL. Topologically, residues 358-368 are cytoplasmic; the sequence is LGHIKAQDKVS. The chain crosses the membrane as a helical span at residues 369–389; sequence TSNYFASIITASLIWVGYCWI. Residues 390–402 lie on the Lumenal side of the membrane; the sequence is SRFAVNTPGYAFS. A helical transmembrane segment spans residues 403–423; it reads NLGFIIMFVGCCWTFWTAIVT. Topologically, residues 424 to 498 are cytoplasmic; it reads DPGFVPKGQQ…NCVGAKNHRS (75 aa). Residues 454–504 form the DHHC domain; that stretch reads NFCIVCMARKPLRSKHCRTCNRCVARFDHHCPWIWNCVGAKNHRSFLLFVL. Cysteine 484 serves as the catalytic S-palmitoyl cysteine intermediate. A helical membrane pass occupies residues 499 to 519; sequence FLLFVLFLIGGIILFIRLTIA. Residues 520–553 are Lumenal-facing; it reads YIQQNAPEYIPTPNPGLTTCDISTTLCQAGDFDP. The helical transmembrane segment at 554–574 threads the bilayer; the sequence is FLLCMALWSTLQLTWTSVLAI. The Cytoplasmic portion of the chain corresponds to 575 to 776; it reads SHLWQVSRQM…RYEVVSEQEV (202 aa). Residues 628-665 form a disordered region; it reads GAGEEAAGPPGAEAGPEGNALLPPPGGHVHGPQCRHGD. Residues 629-645 are compositionally biased toward low complexity; the sequence is AGEEAAGPPGAEAGPEG.

Belongs to the DHHC palmitoyltransferase family. AKR/ZDHHC17 subfamily.

The protein resides in the early endosome membrane. The protein localises to the golgi apparatus membrane. The catalysed reaction is L-cysteinyl-[protein] + hexadecanoyl-CoA = S-hexadecanoyl-L-cysteinyl-[protein] + CoA. Palmitoyltransferase specific for casein kinase 1. This chain is Palmitoyltransferase AKR1 (AKR1), found in Cryptococcus neoformans var. neoformans serotype D (strain B-3501A) (Filobasidiella neoformans).